The chain runs to 335 residues: Biotin synthase (335 aa).

The region spanning 46-274 (YDIQLASLFS…ESKIRLSAGR (229 aa)) is the Radical SAM core domain. The [4Fe-4S] cluster site is built by Cys-61, Cys-65, and Cys-68. [2Fe-2S] cluster is bound by residues Cys-105, Cys-137, Cys-197, and Arg-269.

Belongs to the radical SAM superfamily. Biotin synthase family. In terms of assembly, homodimer. Requires [4Fe-4S] cluster as cofactor. The cofactor is [2Fe-2S] cluster.

The catalysed reaction is (4R,5S)-dethiobiotin + (sulfur carrier)-SH + 2 reduced [2Fe-2S]-[ferredoxin] + 2 S-adenosyl-L-methionine = (sulfur carrier)-H + biotin + 2 5'-deoxyadenosine + 2 L-methionine + 2 oxidized [2Fe-2S]-[ferredoxin]. It functions in the pathway cofactor biosynthesis; biotin biosynthesis; biotin from 7,8-diaminononanoate: step 2/2. Its function is as follows. Catalyzes the conversion of dethiobiotin (DTB) to biotin by the insertion of a sulfur atom into dethiobiotin via a radical-based mechanism. The sequence is that of Biotin synthase from Prochlorococcus marinus (strain MIT 9301).